We begin with the raw amino-acid sequence, 713 residues long: Polyribonucleotide nucleotidyltransferase (713 aa).

The Mg(2+) site is built by Asp-485 and Asp-491. In terms of domain architecture, KH spans 552–611 (PRIHTIKINPEKIKDVIGKGGSVIRALTEETGTNIELDDDGTVRISAVANEAAMEAIRRI). The S1 motif domain occupies 621–689 (NRIYEGKVVR…RQGRVRLSIK (69 aa)).

This sequence belongs to the polyribonucleotide nucleotidyltransferase family. In terms of assembly, component of the RNA degradosome, which is a multiprotein complex involved in RNA processing and mRNA degradation. The cofactor is Mg(2+).

It localises to the cytoplasm. The enzyme catalyses RNA(n+1) + phosphate = RNA(n) + a ribonucleoside 5'-diphosphate. Functionally, involved in mRNA degradation. Catalyzes the phosphorolysis of single-stranded polyribonucleotides processively in the 3'- to 5'-direction. This Aeromonas salmonicida (strain A449) protein is Polyribonucleotide nucleotidyltransferase.